Here is a 30-residue protein sequence, read N- to C-terminus: Varv peptide B (30 aa).

Residues 1-30 constitute a cross-link (cyclopeptide (Gly-Asn)); the sequence is GLPVCGETCFGGTCNTPGCSCDPWPMCSRN. 3 disulfide bridges follow: cysteine 5-cysteine 19, cysteine 9-cysteine 21, and cysteine 14-cysteine 27.

Post-translationally, this is a cyclic peptide.

Probably participates in a plant defense mechanism. The protein is Varv peptide B of Viola arvensis (European field pansy).